Reading from the N-terminus, the 281-residue chain is MAGLVYPQYPVFPGYRHPYRQHPPLYKPKQQYWKPPYKGAPGPLKPTNPLDCLDGYKWAQLKALLSQLGPEFGLGRRFTKEVGVQVNPRVDACIQCSLGPRTLKNCKAGSFLFHAAPGQHAGLGIIAPVRFPLTVAVYSRLSDRRLFTLPTFTNGGKKECETQMDPAEEDLVLNRPAFQFLEQKYGFFHCKNCQTRWESAYVWCVSGTNKVYFKQFCHKCQKGHNPYYVESIECKRCKKAWCSCPERRHIDLKRPHCQELCGRCKGQRLSCDKTYSFKYII.

The 3CxxC-type zinc-finger motif lies at 183-267 (QKYGFFHCKN…QELCGRCKGQ (85 aa)).

The protein belongs to the ZAR1 family. Component of a cytoplasmic ribonucleoprotein complex together with eif4enif1/4E-T and cpeb1. Expressed in oocytes.

The protein localises to the cytoplasm. It localises to the cytoplasmic ribonucleoprotein granule. Its function is as follows. mRNA-binding protein required for maternal mRNA storage, translation and degradation during oocyte maturation. Controls timing of meiosis during oogenesis. Probably promotes formation of some phase-separated membraneless compartment that stores maternal mRNAs in oocytes: acts by undergoing liquid-liquid phase separation upon binding to maternal mRNAs. Binds to the 3'-UTR of maternal mRNAs, inhibiting their translation. The polypeptide is Protein ZAR1-like 1.L (Xenopus laevis (African clawed frog)).